The primary structure comprises 430 residues: GTPase Obg (430 aa).

In terms of domain architecture, Obg spans 1 to 158 (MFVDQVKISL…LEVTLELKLL (158 aa)). The segment at 118–145 (RGGRGGRGNSRFATPRNPAPDFSENGEP) is disordered. One can recognise an OBG-type G domain in the interval 159–329 (ADVGLVGFPS…LLYQIADKLE (171 aa)). GTP-binding positions include 165–172 (GFPSVGKS), 190–194 (FTTIK), 212–215 (DLPG), 282–285 (NKMD), and 310–312 (STI). Mg(2+)-binding residues include serine 172 and threonine 192. The OCT domain maps to 352–430 (KHTPSADKFT…ILGGEFEFVE (79 aa)).

Belongs to the TRAFAC class OBG-HflX-like GTPase superfamily. OBG GTPase family. Monomer. Mg(2+) is required as a cofactor.

The protein resides in the cytoplasm. Its function is as follows. An essential GTPase which binds GTP, GDP and possibly (p)ppGpp with moderate affinity, with high nucleotide exchange rates and a fairly low GTP hydrolysis rate. Plays a role in control of the cell cycle, stress response, ribosome biogenesis and in those bacteria that undergo differentiation, in morphogenesis control. This Staphylococcus epidermidis (strain ATCC 35984 / DSM 28319 / BCRC 17069 / CCUG 31568 / BM 3577 / RP62A) protein is GTPase Obg.